We begin with the raw amino-acid sequence, 199 residues long: Large ribosomal subunit protein bL25 (199 aa).

This sequence belongs to the bacterial ribosomal protein bL25 family. CTC subfamily. Part of the 50S ribosomal subunit; part of the 5S rRNA/L5/L18/L25 subcomplex. Contacts the 5S rRNA. Binds to the 5S rRNA independently of L5 and L18.

In terms of biological role, this is one of the proteins that binds to the 5S RNA in the ribosome where it forms part of the central protuberance. This chain is Large ribosomal subunit protein bL25, found in Caldanaerobacter subterraneus subsp. tengcongensis (strain DSM 15242 / JCM 11007 / NBRC 100824 / MB4) (Thermoanaerobacter tengcongensis).